The sequence spans 211 residues: Imidazole glycerol phosphate synthase subunit HisH (211 aa).

The 209-residue stretch at 3–211 (VVAVIDYEMG…VSQVREKIAA (209 aa)) folds into the Glutamine amidotransferase type-1 domain. The active-site Nucleophile is the Cys-81. Active-site residues include His-186 and Glu-188.

In terms of assembly, heterodimer of HisH and HisF.

The protein resides in the cytoplasm. The enzyme catalyses 5-[(5-phospho-1-deoxy-D-ribulos-1-ylimino)methylamino]-1-(5-phospho-beta-D-ribosyl)imidazole-4-carboxamide + L-glutamine = D-erythro-1-(imidazol-4-yl)glycerol 3-phosphate + 5-amino-1-(5-phospho-beta-D-ribosyl)imidazole-4-carboxamide + L-glutamate + H(+). The catalysed reaction is L-glutamine + H2O = L-glutamate + NH4(+). It functions in the pathway amino-acid biosynthesis; L-histidine biosynthesis; L-histidine from 5-phospho-alpha-D-ribose 1-diphosphate: step 5/9. In terms of biological role, IGPS catalyzes the conversion of PRFAR and glutamine to IGP, AICAR and glutamate. The HisH subunit catalyzes the hydrolysis of glutamine to glutamate and ammonia as part of the synthesis of IGP and AICAR. The resulting ammonia molecule is channeled to the active site of HisF. The chain is Imidazole glycerol phosphate synthase subunit HisH from Nostoc sp. (strain PCC 7120 / SAG 25.82 / UTEX 2576).